The chain runs to 549 residues: Nectin-3 (549 aa).

A signal peptide spans 1–57; the sequence is MARTPGPAPLCPGGGKAQLSSAFPPAAGLLLPAPTPPPLLLLLIPLLLFSRLCGALA. An Ig-like V-type domain is found at 58–165; sequence GSIIVEPHVT…GNAQSSTTVT (108 aa). At 58-404 the chain is on the extracellular side; the sequence is GSIIVEPHVT…ATLKDDTIGT (347 aa). Asparagine 73, asparagine 83, asparagine 125, asparagine 186, asparagine 222, and asparagine 331 each carry an N-linked (GlcNAc...) asparagine glycan. Cysteine 78 and cysteine 148 are joined by a disulfide. Ig-like C2-type domains follow at residues 170-258 and 269-354; these read PTVS…KDIR and PEVS…KVIY. 2 cysteine pairs are disulfide-bonded: cysteine 193–cysteine 246 and cysteine 291–cysteine 338. The chain crosses the membrane as a helical span at residues 405–425; that stretch reads IIASVVGGALFLVLVSILAGV. Over 426-549 the chain is Cytoplasmic; sequence FCYRRRRTFR…SVISRREWYV (124 aa).

The protein belongs to the nectin family. Cis- and trans-homodimer. Can form trans-heterodimers with NECTIN1, NECTIN2, PVR, IGSF4B/Necl-1 and with IGSF4. Interaction between NECTIN1 and NECTIN3 on the pre- and postsynaptic sites, respectively, initiates the formation of puncta adherentia junctions between axons and dendrites. Interacts (via Cytoplasmic domain) with AFDN, providing a connection with the actin cytoskeleton. Binds with low affinity to TIGIT. As to expression, ubiquitous with high expression in testes. Localized in spermatids at Sertoli-spermatid junctions. Expressed in ovarian granulosa cells, but only faintly expressed after ovulation.

It localises to the cell membrane. The protein localises to the postsynaptic cell membrane. Its subcellular location is the cell junction. It is found in the adherens junction. In terms of biological role, cell adhesion molecule that promotes cell-cell adhesion through heterophilic trans-interactions with nectins-like or other nectins, such as trans-interaction with NECTIN2 at Sertoli-spermatid junctions. Trans-interaction with PVR induces activation of CDC42 and RAC small G proteins through common signaling molecules such as SRC and RAP1. Induces endocytosis-mediated down-regulation of PVR from the cell surface, resulting in reduction of cell movement and proliferation. Involved in axon guidance by promoting contacts between the commissural axons and the floor plate cells. Also involved in the formation of cell-cell junctions, including adherens junctions and synapses. Promotes formation of checkerboard-like cellular pattern of hair cells and supporting cells in the auditory epithelium via heterophilic interaction with NECTIN1: NECTIN1 is present in the membrane of hair cells and associates with NECTIN3 on supporting cells, thereby mediating heterotypic adhesion between these two cell types. Plays a role in the morphology of the ciliary body. The chain is Nectin-3 from Mus musculus (Mouse).